We begin with the raw amino-acid sequence, 122 residues long: Fluoride-specific ion channel FluC (122 aa).

Transmembrane regions (helical) follow at residues 4–24 (LLIA…GTAI), 34–54 (IGTM…MTLL), 66–86 (LALV…EWET), and 95–115 (FWIG…AVWF). Residues Gly-74 and Thr-77 each coordinate Na(+).

It belongs to the fluoride channel Fluc/FEX (TC 1.A.43) family.

Its subcellular location is the cell inner membrane. The enzyme catalyses fluoride(in) = fluoride(out). With respect to regulation, na(+) is not transported, but it plays an essential structural role and its presence is essential for fluoride channel function. Functionally, fluoride-specific ion channel. Important for reducing fluoride concentration in the cell, thus reducing its toxicity. This chain is Fluoride-specific ion channel FluC, found in Solibacter usitatus (strain Ellin6076).